We begin with the raw amino-acid sequence, 164 residues long: Ribosome maturation factor RimM (164 aa).

In terms of domain architecture, PRC barrel spans Pro92–Ile164.

The protein belongs to the RimM family. Binds ribosomal protein uS19.

Its subcellular location is the cytoplasm. An accessory protein needed during the final step in the assembly of 30S ribosomal subunit, possibly for assembly of the head region. Essential for efficient processing of 16S rRNA. May be needed both before and after RbfA during the maturation of 16S rRNA. It has affinity for free ribosomal 30S subunits but not for 70S ribosomes. This is Ribosome maturation factor RimM from Orientia tsutsugamushi (strain Ikeda) (Rickettsia tsutsugamushi).